We begin with the raw amino-acid sequence, 109 residues long: Nucleoid-associated protein Swoo_1794 (109 aa).

A disordered region spans residues 88–109; sequence QKDKMAEVTGGMQLPPGMKMPF.

Belongs to the YbaB/EbfC family. Homodimer.

It is found in the cytoplasm. The protein localises to the nucleoid. Binds to DNA and alters its conformation. May be involved in regulation of gene expression, nucleoid organization and DNA protection. The sequence is that of Nucleoid-associated protein Swoo_1794 from Shewanella woodyi (strain ATCC 51908 / MS32).